The sequence spans 236 residues: Uridylate kinase (236 aa).

Residue 11-14 (KFSG) participates in ATP binding. Glycine 53 lines the UMP pocket. 2 residues coordinate ATP: glycine 54 and arginine 58. UMP is bound by residues aspartate 73 and 134–141 (TGSPFFTT). The ATP site is built by threonine 161, tyrosine 167, and aspartate 170.

Belongs to the UMP kinase family. Homohexamer.

The protein resides in the cytoplasm. It catalyses the reaction UMP + ATP = UDP + ADP. It participates in pyrimidine metabolism; CTP biosynthesis via de novo pathway; UDP from UMP (UMPK route): step 1/1. Its activity is regulated as follows. Inhibited by UTP. Functionally, catalyzes the reversible phosphorylation of UMP to UDP. The polypeptide is Uridylate kinase (Hydrogenovibrio crunogenus (strain DSM 25203 / XCL-2) (Thiomicrospira crunogena)).